A 98-amino-acid polypeptide reads, in one-letter code: Keratin-associated protein 3-3 (98 aa).

3 tandem repeats follow at residues 3–7, 47–51, and 89–93. The segment at 3–59 is 3 X 5 AA repeats of C-C-X(3); the sequence is CCASRGCSVPTGPATTICSSDKSCRCGVCLPSTCPHTVWLLEPTCCDNCPPPCHIPQ.

This sequence belongs to the KRTAP type 3 family. Interacts with hair keratins. Localized to the upper cortex of the hair shaft.

Functionally, in the hair cortex, hair keratin intermediate filaments are embedded in an interfilamentous matrix, consisting of hair keratin-associated proteins (KRTAP), which are essential for the formation of a rigid and resistant hair shaft through their extensive disulfide bond cross-linking with abundant cysteine residues of hair keratins. The matrix proteins include the high-sulfur and high-glycine-tyrosine keratins. This chain is Keratin-associated protein 3-3 (KRTAP3-3), found in Homo sapiens (Human).